Reading from the N-terminus, the 101-residue chain is Small ribosomal subunit protein uS14 (101 aa).

Belongs to the universal ribosomal protein uS14 family. Part of the 30S ribosomal subunit. Contacts proteins S3 and S10.

Binds 16S rRNA, required for the assembly of 30S particles and may also be responsible for determining the conformation of the 16S rRNA at the A site. The sequence is that of Small ribosomal subunit protein uS14 from Nitrosomonas europaea (strain ATCC 19718 / CIP 103999 / KCTC 2705 / NBRC 14298).